A 401-amino-acid polypeptide reads, in one-letter code: Probable N-acetyl-gamma-glutamyl-phosphate reductase, chloroplastic (401 aa).

The transit peptide at 1–48 (MSTASAFSSIQGCWFKGERKIRVADKRAKRLTLGSHVASPSSMSFRVS) directs the protein to the chloroplast. C205 is a catalytic residue.

The protein belongs to the NAGSA dehydrogenase family. Type 1 subfamily. Homotetramer.

It localises to the plastid. The protein resides in the chloroplast. The enzyme catalyses N-acetyl-L-glutamate 5-semialdehyde + phosphate + NADP(+) = N-acetyl-L-glutamyl 5-phosphate + NADPH + H(+). It functions in the pathway amino-acid biosynthesis; L-arginine biosynthesis; N(2)-acetyl-L-ornithine from L-glutamate: step 3/4. This is Probable N-acetyl-gamma-glutamyl-phosphate reductase, chloroplastic from Arabidopsis thaliana (Mouse-ear cress).